The sequence spans 59 residues: U-myrmeciitoxin(01)-Mg5b (59 aa).

The N-terminal stretch at 1–21 (MRLSYLSLALAIIFVLTIMHA) is a signal peptide. The propeptide occupies 22–38 (SNVEAKASADPEPDAVG).

Expressed by the venom gland.

It localises to the secreted. Functionally, may have antimicrobial properties, like most ant linear peptides. This chain is U-myrmeciitoxin(01)-Mg5b, found in Myrmecia gulosa (Red bulldog ant).